Here is a 628-residue protein sequence, read N- to C-terminus: FAD-linked oxidoreductase easE (628 aa).

Positions 1–20 are cleaved as a signal peptide; it reads MSHRILCVAFCVCSLVAVSS. The region spanning 144–328 is the FAD-binding PCMH-type domain; it reads HQGRIPLYSA…TRATMRVHLN (185 aa). A Pros-8alpha-FAD histidine modification is found at H182. 3 N-linked (GlcNAc...) asparagine glycosylation sites follow: N343, N382, and N487.

It belongs to the oxygen-dependent FAD-linked oxidoreductase family. FAD serves as cofactor.

The protein operates within alkaloid biosynthesis; ergot alkaloid biosynthesis. In terms of biological role, FAD binding oxidoreductase; part of the gene cluster that mediates the biosynthesis of fumiclavanine C, a fungal ergot alkaloid. DmaW catalyzes the first step of ergot alkaloid biosynthesis by condensing dimethylallyl diphosphate (DMAP) and tryptophan to form 4-dimethylallyl-L-tryptophan. The second step is catalyzed by the methyltransferase easF that methylates 4-dimethylallyl-L-tryptophan in the presence of S-adenosyl-L-methionine, resulting in the formation of 4-dimethylallyl-L-abrine. The catalase easC and the FAD-dependent oxidoreductase easE then transform 4-dimethylallyl-L-abrine to chanoclavine-I which is further oxidized by EasD in the presence of NAD(+), resulting in the formation of chanoclavine-I aldehyde. EasA reduces chanoclavine-I aldehyde to dihydrochanoclavine-I aldehyde that spontaneously dehydrates to form 6,8-dimethyl-6,7-didehydroergoline. EasG then catalyzes the reduction of 6,8-dimethyl-6,7-didehydroergoline to form festuclavine. Hydrolysis of festuclavine by easM then leads to the formation of fumigaclavine B which is in turn acetylated by easN to fumigaclavine A. Finally, easL catalyzes the conversion of fumigaclavine A into fumigaclavine C by attaching a dimethylallyl moiety to C-2 of the indole nucleus. The sequence is that of FAD-linked oxidoreductase easE from Aspergillus fumigatus (strain ATCC MYA-4609 / CBS 101355 / FGSC A1100 / Af293) (Neosartorya fumigata).